The following is a 349-amino-acid chain: tRNA-specific 2-thiouridylase MnmA (349 aa).

Residues 7-14 and leucine 33 each bind ATP; that span reads GLSGGVDS. Cysteine 94 functions as the Nucleophile in the catalytic mechanism. The cysteines at positions 94 and 193 are disulfide-linked. Glycine 119 is a binding site for ATP. The segment at 143–145 is interaction with tRNA; the sequence is KDQ. Cysteine 193 (cysteine persulfide intermediate) is an active-site residue. An interaction with tRNA region spans residues 298–299; it reads RY.

This sequence belongs to the MnmA/TRMU family.

Its subcellular location is the cytoplasm. It carries out the reaction S-sulfanyl-L-cysteinyl-[protein] + uridine(34) in tRNA + AH2 + ATP = 2-thiouridine(34) in tRNA + L-cysteinyl-[protein] + A + AMP + diphosphate + H(+). Catalyzes the 2-thiolation of uridine at the wobble position (U34) of tRNA, leading to the formation of s(2)U34. This Gloeothece citriformis (strain PCC 7424) (Cyanothece sp. (strain PCC 7424)) protein is tRNA-specific 2-thiouridylase MnmA.